An 88-amino-acid polypeptide reads, in one-letter code: Small cysteine-rich outer membrane protein OmcA (88 aa).

Residues 1–18 (MKKTALLAALCSVVSLSS) form the signal peptide. Cys-19 carries N-palmitoyl cysteine lipidation. A lipid anchor (S-diacylglycerol cysteine) is attached at Cys-19.

In terms of assembly, part of a disulfide cross-linked outer membrane complex (COMC) composed of the major outer membrane porin (MOMP), the small cysteine-rich protein (OmcA) and the large cysteine-rich periplasmic protein (OmcB).

It localises to the cell outer membrane. In elementary bodies (EBs, the infectious stage, which is able to survive outside the host cell) provides the structural integrity of the outer envelope through disulfide cross-links with the large cysteine-rich periplasmic protein and the major outer membrane porin. It has been described in publications as the Sarkosyl-insoluble COMC (Chlamydia outer membrane complex), and serves as the functional equivalent of peptidoglycan. This chain is Small cysteine-rich outer membrane protein OmcA (omcA), found in Chlamydia muridarum (strain MoPn / Nigg).